Reading from the N-terminus, the 179-residue chain is Fucolectin-4 (179 aa).

Residues 1 to 23 (MEVKTIMLLFQILAISTLKQGSA) form the signal peptide. Residues 31–179 (EENVALRGRA…VEVNALLPVN (149 aa)) form an F5/8 type C-like region. Ca(2+) is bound by residues N58, D61, N63, and S72. Disulfide bonds link C73–C168, C104–C105, and C130–C146. 2 residues coordinate alpha-L-fucose: H75 and R101. The Cell attachment site signature appears at 101–103 (RGD). R108 is a binding site for alpha-L-fucose. Positions 168 and 169 each coordinate Ca(2+).

The protein belongs to the fucolectin family. Homotrimer. As to expression, gill mucous cells.

The protein localises to the secreted. Acts as a defensive agent. Recognizes blood group fucosylated oligosaccharides including A, B, H and Lewis B-type antigens. Does not recognize Lewis A antigen and has low affinity for monovalent haptens. The polypeptide is Fucolectin-4 (Anguilla japonica (Japanese eel)).